The primary structure comprises 229 residues: Putative N-acetylmannosamine-6-phosphate 2-epimerase (229 aa).

It belongs to the NanE family.

The catalysed reaction is an N-acyl-D-glucosamine 6-phosphate = an N-acyl-D-mannosamine 6-phosphate. It functions in the pathway amino-sugar metabolism; N-acetylneuraminate degradation; D-fructose 6-phosphate from N-acetylneuraminate: step 3/5. In terms of biological role, converts N-acetylmannosamine-6-phosphate (ManNAc-6-P) to N-acetylglucosamine-6-phosphate (GlcNAc-6-P). The sequence is that of Putative N-acetylmannosamine-6-phosphate 2-epimerase from Actinobacillus pleuropneumoniae serotype 3 (strain JL03).